Here is a 338-residue protein sequence, read N- to C-terminus: Heat-inducible transcription repressor HrcA (338 aa).

The protein belongs to the HrcA family.

Functionally, negative regulator of class I heat shock genes (grpE-dnaK-dnaJ and groELS operons). Prevents heat-shock induction of these operons. This is Heat-inducible transcription repressor HrcA from Bacillus cereus (strain B4264).